Reading from the N-terminus, the 213-residue chain is Holliday junction branch migration complex subunit RuvA (213 aa).

A domain I region spans residues 1 to 63 (MISFLRGTVA…EDSMTLFGFA (63 aa)). A domain II region spans residues 64 to 140 (DDDEREVFEV…LVPHGTAPAA (77 aa)). The flexible linker stretch occupies residues 140–144 (AATTA). Residues 145 to 213 (AEASWKPQVV…RAGNRVGSRG (69 aa)) form a domain III region.

The protein belongs to the RuvA family. As to quaternary structure, homotetramer. Forms an RuvA(8)-RuvB(12)-Holliday junction (HJ) complex. HJ DNA is sandwiched between 2 RuvA tetramers; dsDNA enters through RuvA and exits via RuvB. An RuvB hexamer assembles on each DNA strand where it exits the tetramer. Each RuvB hexamer is contacted by two RuvA subunits (via domain III) on 2 adjacent RuvB subunits; this complex drives branch migration. In the full resolvosome a probable DNA-RuvA(4)-RuvB(12)-RuvC(2) complex forms which resolves the HJ.

It localises to the cytoplasm. The RuvA-RuvB-RuvC complex processes Holliday junction (HJ) DNA during genetic recombination and DNA repair, while the RuvA-RuvB complex plays an important role in the rescue of blocked DNA replication forks via replication fork reversal (RFR). RuvA specifically binds to HJ cruciform DNA, conferring on it an open structure. The RuvB hexamer acts as an ATP-dependent pump, pulling dsDNA into and through the RuvAB complex. HJ branch migration allows RuvC to scan DNA until it finds its consensus sequence, where it cleaves and resolves the cruciform DNA. This Pseudarthrobacter chlorophenolicus (strain ATCC 700700 / DSM 12829 / CIP 107037 / JCM 12360 / KCTC 9906 / NCIMB 13794 / A6) (Arthrobacter chlorophenolicus) protein is Holliday junction branch migration complex subunit RuvA.